Consider the following 429-residue polypeptide: Serine--tRNA ligase (429 aa).

Residue 235 to 237 coordinates L-serine; the sequence is TAE. ATP is bound at residue 266–268; that stretch reads RSE. Glutamate 289 provides a ligand contact to L-serine. Residue 353-356 coordinates ATP; that stretch reads EISS. L-serine is bound at residue serine 389.

The protein belongs to the class-II aminoacyl-tRNA synthetase family. Type-1 seryl-tRNA synthetase subfamily. As to quaternary structure, homodimer. The tRNA molecule binds across the dimer.

The protein resides in the cytoplasm. It catalyses the reaction tRNA(Ser) + L-serine + ATP = L-seryl-tRNA(Ser) + AMP + diphosphate + H(+). The catalysed reaction is tRNA(Sec) + L-serine + ATP = L-seryl-tRNA(Sec) + AMP + diphosphate + H(+). It participates in aminoacyl-tRNA biosynthesis; selenocysteinyl-tRNA(Sec) biosynthesis; L-seryl-tRNA(Sec) from L-serine and tRNA(Sec): step 1/1. Its function is as follows. Catalyzes the attachment of serine to tRNA(Ser). Is also able to aminoacylate tRNA(Sec) with serine, to form the misacylated tRNA L-seryl-tRNA(Sec), which will be further converted into selenocysteinyl-tRNA(Sec). In Histophilus somni (strain 129Pt) (Haemophilus somnus), this protein is Serine--tRNA ligase.